The following is a 104-amino-acid chain: Growth-regulated protein homolog alpha (104 aa).

Residues 1 to 30 (MAPAATAAAPRLLRAAMLFLLLVAAGRRAA) form the signal peptide. Cystine bridges form between Cys-40/Cys-66 and Cys-42/Cys-82.

The protein belongs to the intercrine alpha (chemokine CxC) family.

The protein resides in the secreted. This chain is Growth-regulated protein homolog alpha, found in Bos taurus (Bovine).